Reading from the N-terminus, the 442-residue chain is MEINNVSSEIIKPSSPTPQHLKTHKLSVLDQVAGDSLFPIILFYPQTCSNNTSLNKTSDLLKRSLSQTLTLYHPFAGRLKDEFSIDCDDTGATFIEARAAASDMSEIVKQPTVDMLEQLMPYKLNEKPSVAVNLAAKVTYFEHCGGMALCVCFSHVIADITTAANFIKTWVTFASGSDTSSEDDDVIKHAVFGCSSIFPPQKFSSFSRNVISENHSNSAEILTKRFIFDGDKIAALKEKMGSESSSGYHPTRVEAVSAIILGGIMSVEKQADDFNHSHLVASIAVNLRNRVNPPIPEQSIGNIVQAGIAKLPIEKKTIDYRNLAETLHKSIEKINDEYLRKFHADGGFLSNMNDVLEGLFDKNCRWFTISAWCRRPLYEADFGWGKPAWVSTVMKHKDVAVLLDSSDGKGIEAWVALPKKDMAKFEQDSGILRYASIDTSLI.

Residues H155 and D381 each act as proton acceptor in the active site.

The protein belongs to the plant acyltransferase family. Monomer.

It catalyses the reaction (1S)-1-hydroxy-luvungin A + acetyl-CoA = (1S)-1-acetoxy-luvungin A + CoA. The protein operates within secondary metabolite biosynthesis; terpenoid biosynthesis. Acetyltransferase involved in the biosynthesis of limonoids triterpene natural products such as limonin, a compound with insecticidal activity responsible for the bitter taste in citrus. Catalyzes the formation of (1S)-1-acetoxy-luvungin A from (1S)-1-hydroxy-luvungin A. The sequence is that of Limonoid 1-O-acetyltransferse from Citrus sinensis (Sweet orange).